Here is a 291-residue protein sequence, read N- to C-terminus: Undecaprenyl-diphosphatase (291 aa).

The next 8 membrane-spanning stretches (helical) occupy residues 1 to 21 (MIII…LTEF), 48 to 68 (SAFT…AWVF), 100 to 120 (LHVL…DDFI), 124 to 144 (LFSV…MIIA), 160 to 180 (INYV…WPGF), 201 to 221 (SDFT…LSLV), 230 to 250 (AHIP…LIAI), and 270 to 290 (IVLV…QGIS).

The protein belongs to the UppP family.

It is found in the cell membrane. It catalyses the reaction di-trans,octa-cis-undecaprenyl diphosphate + H2O = di-trans,octa-cis-undecaprenyl phosphate + phosphate + H(+). Functionally, catalyzes the dephosphorylation of undecaprenyl diphosphate (UPP). Confers resistance to bacitracin. The protein is Undecaprenyl-diphosphatase of Staphylococcus haemolyticus (strain JCSC1435).